Here is a 122-residue protein sequence, read N- to C-terminus: Large ribosomal subunit protein bL12 (122 aa).

This sequence belongs to the bacterial ribosomal protein bL12 family. As to quaternary structure, homodimer. Part of the ribosomal stalk of the 50S ribosomal subunit. Forms a multimeric L10(L12)X complex, where L10 forms an elongated spine to which 2 to 4 L12 dimers bind in a sequential fashion. Binds GTP-bound translation factors.

Functionally, forms part of the ribosomal stalk which helps the ribosome interact with GTP-bound translation factors. Is thus essential for accurate translation. This chain is Large ribosomal subunit protein bL12, found in Vibrio vulnificus (strain CMCP6).